The following is a 652-amino-acid chain: DNA mismatch repair protein MutL (652 aa).

The protein belongs to the DNA mismatch repair MutL/HexB family.

Its function is as follows. This protein is involved in the repair of mismatches in DNA. It is required for dam-dependent methyl-directed DNA mismatch repair. May act as a 'molecular matchmaker', a protein that promotes the formation of a stable complex between two or more DNA-binding proteins in an ATP-dependent manner without itself being part of a final effector complex. This Aliivibrio salmonicida (strain LFI1238) (Vibrio salmonicida (strain LFI1238)) protein is DNA mismatch repair protein MutL.